The chain runs to 131 residues: Small ribosomal subunit protein uS8 (131 aa).

This sequence belongs to the universal ribosomal protein uS8 family. Part of the 30S ribosomal subunit. Contacts proteins S5 and S12.

In terms of biological role, one of the primary rRNA binding proteins, it binds directly to 16S rRNA central domain where it helps coordinate assembly of the platform of the 30S subunit. This Methylococcus capsulatus (strain ATCC 33009 / NCIMB 11132 / Bath) protein is Small ribosomal subunit protein uS8.